Here is a 143-residue protein sequence, read N- to C-terminus: Ribonuclease H (143 aa).

One can recognise an RNase H type-1 domain in the interval 1–136 (MQEIEIFCDG…CDSLAKLEAQ (136 aa)). Mg(2+) contacts are provided by Asp-9, Glu-47, Asp-69, and Asp-128.

Belongs to the RNase H family. In terms of assembly, monomer. Mg(2+) is required as a cofactor.

The protein resides in the cytoplasm. It carries out the reaction Endonucleolytic cleavage to 5'-phosphomonoester.. Functionally, endonuclease that specifically degrades the RNA of RNA-DNA hybrids. The chain is Ribonuclease H from Helicobacter acinonychis (strain Sheeba).